The following is a 445-amino-acid chain: MSEFTQDTVQKPIDELVTWVKQYDFSLNLPTERLAFLLAIAVLSNERFDEELGEGELHDAFAIVTRLFAESGEASAFRANNAINDLVKQRLLSRFTSEMTEGASIYRLTPLAIGITDYYVRHREFSKLKLSIQLSMVADEMAKAVESAQQGGSVAHWRKNVFGVLKYSVSEIFDRIDLNQRVMDEQQQSVKEQIADLLNKDWRDAINNCEALLSETSATLRELQDTLQAAGDELQTQILDIQECVYGDLELDFIEETLFALQMKLDRITSWGQQSIDLWIGYDRHVHKFIRTAIDMDQNRAFSQRLRQSMNDYFEQPWYLTYADAERLSDLRDETLTLRDEEVTGHVPTEVEYEELQQVNDELAQRIGDMLKVHKEQGAAIDLALVLRDYLASHPRTHHFDLARMVVDQAVRLGYSESDYRAIQPDWTAINDFGAKVQANVIDRY.

Positions 213 to 241 (LSETSATLRELQDTLQAAGDELQTQILDI) are leucine-zipper.

Belongs to the MukF family. As to quaternary structure, interacts, and probably forms a ternary complex, with MukE and MukB via its C-terminal region. The complex formation is stimulated by calcium or magnesium. It is required for an interaction between MukE and MukB.

It localises to the cytoplasm. The protein resides in the nucleoid. Functionally, involved in chromosome condensation, segregation and cell cycle progression. May participate in facilitating chromosome segregation by condensation DNA from both sides of a centrally located replisome during cell division. Not required for mini-F plasmid partitioning. Probably acts via its interaction with MukB and MukE. Overexpression results in anucleate cells. It has a calcium binding activity. The protein is Chromosome partition protein MukF of Vibrio cholerae serotype O1 (strain ATCC 39541 / Classical Ogawa 395 / O395).